Reading from the N-terminus, the 483-residue chain is Protein FIZZY-RELATED 2 (483 aa).

A disordered region spans residues Met-1 to Asn-28. Residues Thr-7–Asn-28 show a composition bias toward polar residues. WD repeat units lie at residues Gln-174–Leu-211, Gly-215–Thr-254, Gly-257–Ser-294, Gly-298–Lys-337, Glu-340–Ser-382, Asp-384–Thr-425, and Gly-428–Asn-467.

This sequence belongs to the WD repeat CDC20/Fizzy family. Associates with the APC/C complex. Interacts with CDC20-1, CDC20-2, CYCA1-1, CYCA1-2, CYCA3-4, CYCB1-1 and CYCB1-2. Binds to GIG1 and PYM. As to expression, expressed in seedlings, flowers, leaves and roots. Expressed in the differentiating cell files of the root elongation zone.

It is found in the nucleus. It functions in the pathway protein modification; protein ubiquitination. Functionally, activator protein that regulates the ubiquitin ligase activity and substrate specificity of the anaphase promoting complex/cyclosome (APC/C). Necessary and sufficient for endoreduplication and correct cell expansion. Controls meristem size by stimulating endoreduplication in the elongation zone. This Arabidopsis thaliana (Mouse-ear cress) protein is Protein FIZZY-RELATED 2 (FZR2).